A 362-amino-acid chain; its full sequence is Lipoprotein p35 (362 aa).

An N-terminal signal peptide occupies residues 1–30 (MKIKKIKLLKALALTGAFGIVATVPVIVSS). Cys31 is lipidated: N-palmitoyl cysteine. Cys31 is lipidated: S-diacylglycerol cysteine. A disordered region spans residues 33 to 53 (STSENNGNGNGNGGTDGNTQQ).

Belongs to the p35 lipoprotein family. The N-terminus is blocked.

It localises to the cell membrane. Major M.penetrans antigen. This Malacoplasma penetrans (strain HF-2) (Mycoplasma penetrans) protein is Lipoprotein p35.